Here is a 242-residue protein sequence, read N- to C-terminus: UPF0173 metal-dependent hydrolase APE_1117 (242 aa).

Belongs to the UPF0173 family.

This Aeropyrum pernix (strain ATCC 700893 / DSM 11879 / JCM 9820 / NBRC 100138 / K1) protein is UPF0173 metal-dependent hydrolase APE_1117.